A 346-amino-acid polypeptide reads, in one-letter code: Biotin synthase (346 aa).

The Radical SAM core domain occupies 40-264 (NEVQVSTLLS…MMPHSHVRLS (225 aa)). The [4Fe-4S] cluster site is built by Cys-55, Cys-59, and Cys-62. [2Fe-2S] cluster contacts are provided by Cys-99, Cys-130, Cys-190, and Arg-262.

It belongs to the radical SAM superfamily. Biotin synthase family. As to quaternary structure, homodimer. It depends on [4Fe-4S] cluster as a cofactor. The cofactor is [2Fe-2S] cluster.

It carries out the reaction (4R,5S)-dethiobiotin + (sulfur carrier)-SH + 2 reduced [2Fe-2S]-[ferredoxin] + 2 S-adenosyl-L-methionine = (sulfur carrier)-H + biotin + 2 5'-deoxyadenosine + 2 L-methionine + 2 oxidized [2Fe-2S]-[ferredoxin]. The protein operates within cofactor biosynthesis; biotin biosynthesis; biotin from 7,8-diaminononanoate: step 2/2. Catalyzes the conversion of dethiobiotin (DTB) to biotin by the insertion of a sulfur atom into dethiobiotin via a radical-based mechanism. The chain is Biotin synthase from Colwellia psychrerythraea (strain 34H / ATCC BAA-681) (Vibrio psychroerythus).